Here is a 213-residue protein sequence, read N- to C-terminus: Urease accessory protein UreE (213 aa).

The disordered stretch occupies residues 170–213; it reads EHHGRSHSHSHSHSHDHDHDHDHDHDHDHQHGPSCSHGHGHGHR. Basic and acidic residues predominate over residues 182–200; it reads HSHDHDHDHDHDHDHDHQH.

The protein belongs to the UreE family.

The protein localises to the cytoplasm. Its function is as follows. Involved in urease metallocenter assembly. Binds nickel. Probably functions as a nickel donor during metallocenter assembly. The chain is Urease accessory protein UreE from Burkholderia thailandensis (strain ATCC 700388 / DSM 13276 / CCUG 48851 / CIP 106301 / E264).